The sequence spans 295 residues: Phosphoenolpyruvate phosphomutase (295 aa).

Aspartate 58 serves as the catalytic Nucleophile. Position 58 (aspartate 58) interacts with Mg(2+).

This sequence belongs to the isocitrate lyase/PEP mutase superfamily. PEP mutase family. As to quaternary structure, homotetramer. Mg(2+) is required as a cofactor.

It carries out the reaction phosphoenolpyruvate + H(+) = 3-phosphonopyruvate. It participates in phosphorus metabolism; phosphonate biosynthesis. Functionally, formation of a carbon-phosphorus bond by converting phosphoenolpyruvate (PEP) to phosphonopyruvate (P-Pyr). This chain is Phosphoenolpyruvate phosphomutase, found in Mytilus edulis (Blue mussel).